Here is a 146-residue protein sequence, read N- to C-terminus: UPF0306 protein HD_1359 (146 aa).

The protein belongs to the UPF0306 family.

This is UPF0306 protein HD_1359 from Haemophilus ducreyi (strain 35000HP / ATCC 700724).